The sequence spans 360 residues: Complement control protein homolog (360 aa).

The first 20 residues, Met1–Thr20, serve as a signal peptide directing secretion. Sushi domains lie at Leu21 to Lys81, Lys82 to Ile144, Lys145 to Phe207, and Ile208 to Lys266. 8 cysteine pairs are disulfide-bonded: Cys23–Cys68, Cys54–Cys79, Cys84–Cys125, Cys111–Cys142, Cys147–Cys191, Cys175–Cys205, Cys210–Cys252, and Cys238–Cys264. 4 N-linked (GlcNAc...) asparagine; by host glycosylation sites follow: Asn36, Asn39, Asn46, and Asn72. Asn155 is a glycosylation site (N-linked (GlcNAc...) asparagine; by host). Asn294 carries N-linked (GlcNAc...) asparagine; by host glycosylation. Residues Gly328–Leu350 form a helical membrane-spanning segment.

This sequence belongs to the receptors of complement activation (RCA) family.

The protein resides in the membrane. It localises to the secreted. The chain is Complement control protein homolog (4) from Saimiriine herpesvirus 2 (strain 11) (SaHV-2).